We begin with the raw amino-acid sequence, 261 residues long: Undecaprenyl-diphosphatase (261 aa).

The next 8 membrane-spanning stretches (helical) occupy residues 1-21, 40-60, 79-99, 106-126, 140-160, 185-205, 210-230, and 239-259; these read MTVLQAIVLGLVQGVGEFLPI, GLTFDVALHLGTLIAVVAYFW, GRLFWYLIVASIPGAIFGVLF, IFRSPLLIALTLTLMGLGLWW, VNLFDGIIVGISQALAIIPGV, FLMSVPIIAGAALLKLKELPL, LAFIAGVLTAAVVGFLAIKFL, and YLLFTGYRILLAALIVAVFWL.

Belongs to the UppP family.

The protein localises to the cell membrane. It carries out the reaction di-trans,octa-cis-undecaprenyl diphosphate + H2O = di-trans,octa-cis-undecaprenyl phosphate + phosphate + H(+). Catalyzes the dephosphorylation of undecaprenyl diphosphate (UPP). Confers resistance to bacitracin. In Moorella thermoacetica (strain ATCC 39073 / JCM 9320), this protein is Undecaprenyl-diphosphatase.